The primary structure comprises 339 residues: Anthranilate phosphoribosyltransferase (339 aa).

5-phospho-alpha-D-ribose 1-diphosphate contacts are provided by residues Gly-81, 84 to 85 (GD), Ser-89, 91 to 94 (NVSS), 109 to 117 (KHGNRALSS), and Ala-121. Gly-81 serves as a coordination point for anthranilate. Ser-93 contacts Mg(2+). Asn-112 serves as a coordination point for anthranilate. Arg-167 contacts anthranilate. 2 residues coordinate Mg(2+): Asp-225 and Glu-226.

This sequence belongs to the anthranilate phosphoribosyltransferase family. Homodimer. Requires Mg(2+) as cofactor.

The enzyme catalyses N-(5-phospho-beta-D-ribosyl)anthranilate + diphosphate = 5-phospho-alpha-D-ribose 1-diphosphate + anthranilate. Its pathway is amino-acid biosynthesis; L-tryptophan biosynthesis; L-tryptophan from chorismate: step 2/5. Its function is as follows. Catalyzes the transfer of the phosphoribosyl group of 5-phosphorylribose-1-pyrophosphate (PRPP) to anthranilate to yield N-(5'-phosphoribosyl)-anthranilate (PRA). This Brucella ovis (strain ATCC 25840 / 63/290 / NCTC 10512) protein is Anthranilate phosphoribosyltransferase.